Here is a 253-residue protein sequence, read N- to C-terminus: Imidazole glycerol phosphate synthase subunit HisF (253 aa).

Residues Asp11 and Asp130 contribute to the active site.

Belongs to the HisA/HisF family. As to quaternary structure, heterodimer of HisH and HisF.

The protein resides in the cytoplasm. It carries out the reaction 5-[(5-phospho-1-deoxy-D-ribulos-1-ylimino)methylamino]-1-(5-phospho-beta-D-ribosyl)imidazole-4-carboxamide + L-glutamine = D-erythro-1-(imidazol-4-yl)glycerol 3-phosphate + 5-amino-1-(5-phospho-beta-D-ribosyl)imidazole-4-carboxamide + L-glutamate + H(+). The protein operates within amino-acid biosynthesis; L-histidine biosynthesis; L-histidine from 5-phospho-alpha-D-ribose 1-diphosphate: step 5/9. In terms of biological role, IGPS catalyzes the conversion of PRFAR and glutamine to IGP, AICAR and glutamate. The HisF subunit catalyzes the cyclization activity that produces IGP and AICAR from PRFAR using the ammonia provided by the HisH subunit. This chain is Imidazole glycerol phosphate synthase subunit HisF, found in Cereibacter sphaeroides (strain KD131 / KCTC 12085) (Rhodobacter sphaeroides).